Reading from the N-terminus, the 446-residue chain is Thymidine phosphorylase (446 aa).

Belongs to the thymidine/pyrimidine-nucleoside phosphorylase family. In terms of assembly, homodimer.

The enzyme catalyses thymidine + phosphate = 2-deoxy-alpha-D-ribose 1-phosphate + thymine. The protein operates within pyrimidine metabolism; dTMP biosynthesis via salvage pathway; dTMP from thymine: step 1/2. Its function is as follows. The enzymes which catalyze the reversible phosphorolysis of pyrimidine nucleosides are involved in the degradation of these compounds and in their utilization as carbon and energy sources, or in the rescue of pyrimidine bases for nucleotide synthesis. This is Thymidine phosphorylase from Idiomarina loihiensis (strain ATCC BAA-735 / DSM 15497 / L2-TR).